The primary structure comprises 62 residues: Short neurotoxin 2 (62 aa).

The interval 1 to 20 (MTCYNQQSSEAKTTTTCSGG) is disordered. 4 cysteine pairs are disulfide-bonded: Cys3-Cys24, Cys17-Cys41, Cys43-Cys54, and Cys55-Cys60.

It belongs to the three-finger toxin family. Short-chain subfamily. Type I alpha-neurotoxin sub-subfamily. Expressed by the venom gland.

The protein localises to the secreted. Binds to muscle nicotinic acetylcholine receptor (nAChR) and inhibit acetylcholine from binding to the receptor, thereby impairing neuromuscular transmission. The chain is Short neurotoxin 2 from Oxyuranus scutellatus scutellatus (Australian taipan).